A 162-amino-acid polypeptide reads, in one-letter code: Ribosome maturation factor RimP (162 aa).

It belongs to the RimP family.

It localises to the cytoplasm. Required for maturation of 30S ribosomal subunits. This chain is Ribosome maturation factor RimP, found in Leptospira borgpetersenii serovar Hardjo-bovis (strain JB197).